Consider the following 776-residue polypeptide: DNA topoisomerase 1 (776 aa).

Residues 1–111 (MKLVIVESPA…VKSDDFFKRV (111 aa)) enclose the Toprim domain. Residues Glu7 and Asp80 each coordinate Mg(2+). Residues 132-568 (DTNLVNAQQA…FWSGFNHNIE (437 aa)) enclose the Topo IA-type catalytic domain. Residues 166–171 (SAGRVQ) are interaction with DNA. Tyr304 acts as the O-(5'-phospho-DNA)-tyrosine intermediate in catalysis. The C4-type zinc finger occupies 600-627 (CPSCNTGELSLKLGKFGAFLACSNYPEC).

The protein belongs to the type IA topoisomerase family. Monomer. It depends on Mg(2+) as a cofactor.

It catalyses the reaction ATP-independent breakage of single-stranded DNA, followed by passage and rejoining.. Functionally, releases the supercoiling and torsional tension of DNA, which is introduced during the DNA replication and transcription, by transiently cleaving and rejoining one strand of the DNA duplex. Introduces a single-strand break via transesterification at a target site in duplex DNA. The scissile phosphodiester is attacked by the catalytic tyrosine of the enzyme, resulting in the formation of a DNA-(5'-phosphotyrosyl)-enzyme intermediate and the expulsion of a 3'-OH DNA strand. The free DNA strand then undergoes passage around the unbroken strand, thus removing DNA supercoils. Finally, in the religation step, the DNA 3'-OH attacks the covalent intermediate to expel the active-site tyrosine and restore the DNA phosphodiester backbone. The sequence is that of DNA topoisomerase 1 from Rickettsia conorii (strain ATCC VR-613 / Malish 7).